The sequence spans 478 residues: tRNA (guanine(10)-N(2))-methyltransferase TRMT11 (478 aa).

The tract at residues 457 to 478 (EERARSEMANAENVKSKGKEDV) is disordered.

Belongs to the class I-like SAM-binding methyltransferase superfamily. TRM11 methyltransferase family. In terms of assembly, part of the heterodimeric TRMT11-TRM112 methyltransferase complex; this complex forms an active tRNA methyltransferase, where TRMT112 acts as an activator of the catalytic subunit TRMT11.

The protein localises to the cytoplasm. It catalyses the reaction guanosine(10) in tRNA + S-adenosyl-L-methionine = N(2)-methylguanosine(10) in tRNA + S-adenosyl-L-homocysteine + H(+). In terms of biological role, catalytic subunit of the TRMT11-TRM112 methyltransferase complex, that specifically mediates the S-adenosyl-L-methionine-dependent N(2)-methylation of guanosine nucleotide at position 10 (m2G10) in tRNAs. This is one of the major tRNA (guanine-N(2))-methyltransferases. This is tRNA (guanine(10)-N(2))-methyltransferase TRMT11 (trmt11.L) from Xenopus laevis (African clawed frog).